The following is a 673-amino-acid chain: Protein transport Sec1a (673 aa).

Residues 538 to 591 (SSHKEESEARTGSVRKSSAPTAVPERKATPHSMRSRRTATWARPHSSDDGYSSD) are disordered.

This sequence belongs to the STXBP/unc-18/SEC1 family. Does not bind the syntaxin KNOLLE.

Its function is as follows. Involved in the vesicle trafficking. Binds syntaxins. The chain is Protein transport Sec1a (SEC1A) from Arabidopsis thaliana (Mouse-ear cress).